A 161-amino-acid chain; its full sequence is MPSFDITSEVDEPSLRNSVDVANSKIAGRHDFKGTSANVELKEKLMTLYGDSDFQLDQMKAILLPEMTKKKVDVRCLEYGDVQKVSGNKVKQEVKVRVGVDQDLAKKIVKLLKDSKLKVQAAIQGDAVRVSGAKRDVLQEAIALVKKQITDFPLQFGNFRD.

Belongs to the YajQ family.

Nucleotide-binding protein. The sequence is that of Nucleotide-binding protein azo2183 from Azoarcus sp. (strain BH72).